Here is a 150-residue protein sequence, read N- to C-terminus: Large ribosomal subunit protein bL9 (150 aa).

The protein belongs to the bacterial ribosomal protein bL9 family.

Its function is as follows. Binds to the 23S rRNA. This Acidovorax ebreus (strain TPSY) (Diaphorobacter sp. (strain TPSY)) protein is Large ribosomal subunit protein bL9.